Consider the following 325-residue polypeptide: tRNA N6-adenosine threonylcarbamoyltransferase (325 aa).

Fe cation is bound by residues H107 and H111. Substrate contacts are provided by residues 129–133 (LVSGG), D162, G175, and N265. Residue D293 participates in Fe cation binding.

The protein belongs to the KAE1 / TsaD family. It depends on Fe(2+) as a cofactor.

It is found in the cytoplasm. It carries out the reaction L-threonylcarbamoyladenylate + adenosine(37) in tRNA = N(6)-L-threonylcarbamoyladenosine(37) in tRNA + AMP + H(+). In terms of biological role, required for the formation of a threonylcarbamoyl group on adenosine at position 37 (t(6)A37) in tRNAs that read codons beginning with adenine. Is involved in the transfer of the threonylcarbamoyl moiety of threonylcarbamoyl-AMP (TC-AMP) to the N6 group of A37, together with TsaE and TsaB. TsaD likely plays a direct catalytic role in this reaction. The polypeptide is tRNA N6-adenosine threonylcarbamoyltransferase (Sulfurimonas denitrificans (strain ATCC 33889 / DSM 1251) (Thiomicrospira denitrificans (strain ATCC 33889 / DSM 1251))).